A 771-amino-acid chain; its full sequence is Beta-glucan synthesis-associated protein SKN1 (771 aa).

The segment covering 1–11 has biased composition (polar residues); sequence MSVRNLTNNRH. Disordered regions lie at residues 1–112 and 126–186; these read MSVR…QRMS and ANNL…PFDR. At 1–289 the chain is on the cytoplasmic side; sequence MSVRNLTNNR…DDFKHMDRRS (289 aa). Low complexity predominate over residues 14–37; sequence SENSVSGSENSFYSSNEQSRQSSS. A phosphoserine mark is found at Ser-56, Ser-65, Ser-67, Ser-92, Ser-103, Ser-142, Ser-162, Ser-165, Ser-170, and Ser-176. Over residues 76-93 the composition is skewed to low complexity; it reads NEYSSSSSINYNNDPNSD. Composition is skewed to low complexity over residues 126–152 and 159–177; these read ANNL…FASH and NLPS…NNSL. A helical; Signal-anchor for type II membrane protein transmembrane segment spans residues 290-310; sequence FLGLLGILFLFMAGIFIFIVL. Over 311–771 the chain is Lumenal; the sequence is PAITFSGVVY…GCSSSKFSLS (461 aa). Asn-337, Asn-426, Asn-513, Asn-590, Asn-615, and Asn-743 each carry an N-linked (GlcNAc...) asparagine glycan. Positions 353–716 constitute a GH16 domain; it reads AIRTTLVDPD…YVRLYQPKGS (364 aa).

This sequence belongs to the SKN1/KRE6 family.

Its subcellular location is the membrane. Functionally, required for synthesis of the major beta-glucans of the yeast cell wall. The chain is Beta-glucan synthesis-associated protein SKN1 (SKN1) from Saccharomyces cerevisiae (strain ATCC 204508 / S288c) (Baker's yeast).